A 423-amino-acid polypeptide reads, in one-letter code: MSTRNCQGIDSVIKPLDTIPEDKKVRVQRTQSSFDPFEKTSNQVKRVHSENNACINFKSASVGKESPKVRRHSSPSSPTSPKFGKADSYEKLEKLGEGSYATVYKGKSKVNGKLVALKVIRLQEEEGTPFTAIREASLLKGLKHANIVLLHDIIHTKETLTLVFEYVHTDLCQYMDKHPGGLNPENVKLFLFQLLRGLSYIHQGHILHRDLKPQNLLISDTGELKLADFGLARAKSVPSHTYSNEVVTLWYRPPDVLLGSTDYSTCLDMWGVGCIFVEMIQGVAAFPGMKDIQDQLERIFLILGTPNEETWPGVHSLPHFKLERFTQYGPKNLRQAWNKLSYVNHAEDLASKLLQCFPKNRLSAQAALNHDYFSDLPPRLWELSDMSSIFTVPNVKLQPEAGESMRVFGKNNSFSKSLSNSKH.

The interval 62–85 is disordered; sequence VGKESPKVRRHSSPSSPTSPKFGK. Residues 89 to 373 form the Protein kinase domain; sequence YEKLEKLGEG…AQAALNHDYF (285 aa). ATP contacts are provided by residues 95-103 and lysine 118; that span reads LGEGSYATV. The Proton acceptor role is filled by aspartate 210.

The protein belongs to the protein kinase superfamily. CMGC Ser/Thr protein kinase family. CDC2/CDKX subfamily. Interacts with ccny; ccny mediates its recruitment to the plasma membrane and promotes phosphorylation of lrp6.

Its subcellular location is the cell membrane. It carries out the reaction L-seryl-[protein] + ATP = O-phospho-L-seryl-[protein] + ADP + H(+). It catalyses the reaction L-threonyl-[protein] + ATP = O-phospho-L-threonyl-[protein] + ADP + H(+). Serine/threonine-protein kinase involved in the control of the eukaryotic cell cycle, whose activity is controlled by an associated cyclin. Acts as a cell-cycle regulator of Wnt signaling pathway during G2/M phase by mediating the phosphorylation of lrp6, leading to the activation of the Wnt signaling pathway. The chain is Cyclin-dependent kinase 14 (cdk14) from Xenopus tropicalis (Western clawed frog).